The sequence spans 515 residues: 2-isopropylmalate synthase (515 aa).

The 263-residue stretch at 4 to 266 folds into the Pyruvate carboxyltransferase domain; that stretch reads IKIFDTTLRD…ETGLILKETK (263 aa). Mn(2+) contacts are provided by Asp13, His201, His203, and Asn237. Residues 392-515 form a regulatory domain region; the sequence is KLIQFGVSYD…ANLTRLVYES (124 aa).

Belongs to the alpha-IPM synthase/homocitrate synthase family. LeuA type 1 subfamily. As to quaternary structure, homodimer. Requires Mn(2+) as cofactor.

Its subcellular location is the cytoplasm. It carries out the reaction 3-methyl-2-oxobutanoate + acetyl-CoA + H2O = (2S)-2-isopropylmalate + CoA + H(+). It participates in amino-acid biosynthesis; L-leucine biosynthesis; L-leucine from 3-methyl-2-oxobutanoate: step 1/4. Its function is as follows. Catalyzes the condensation of the acetyl group of acetyl-CoA with 3-methyl-2-oxobutanoate (2-ketoisovalerate) to form 3-carboxy-3-hydroxy-4-methylpentanoate (2-isopropylmalate). The protein is 2-isopropylmalate synthase of Oceanobacillus iheyensis (strain DSM 14371 / CIP 107618 / JCM 11309 / KCTC 3954 / HTE831).